The primary structure comprises 150 residues: Protein-arginine-phosphatase (150 aa).

Cysteine 7 serves as the catalytic Nucleophile. Residue threonine 8–arginine 13 participates in substrate binding. Arginine 13 is an active-site residue. The active-site Proton donor/acceptor is the aspartate 118.

The protein belongs to the low molecular weight phosphotyrosine protein phosphatase family.

It catalyses the reaction N(omega)-phospho-L-arginyl-[protein] + H2O = L-arginyl-[protein] + phosphate. Its activity is regulated as follows. Efficiently inhibited by Cu(2+) ion, Zn(2+) ion, sodium pyrophosphate and N-ethylmaleimide, while the addition of Mg(2+), Ca(2+) or Fe(3+) ions has minimal effect. Inhibited in a competitive manner by vanadate. Its function is as follows. Catalyzes the specific dephosphorylation of phosphoarginine residues in a large number of proteins. Counteracts the protein arginine kinase McsB in vivo. Can dephosphorylate CtsR-P; thus, can restore the DNA-binding ability of the CtsR repressor by reversing the McsB-mediated phosphorylation. Is the only active pArg phosphatase present in B.subtilis. Exhibits almost no activity against pSer, pThr, or pTyr peptides. Appears to play a role in B.subtilis stress resistance. Protein arginine phosphorylation has a physiologically important role and is involved in the regulation of many critical cellular processes, such as protein homeostasis, motility, competence, and stringent and stress responses, by regulating gene expression and protein activity. This Bacillus subtilis (strain 168) protein is Protein-arginine-phosphatase (ywlE).